The following is a 200-amino-acid chain: Protein GrpE (200 aa).

Residues 1 to 12 are compositionally biased toward basic and acidic residues; it reads MSNEEIKNKDEQ. The interval 1–30 is disordered; that stretch reads MSNEEIKNKDEQLQQDAVETEAEVVGTDAD.

It belongs to the GrpE family. In terms of assembly, homodimer.

It is found in the cytoplasm. In terms of biological role, participates actively in the response to hyperosmotic and heat shock by preventing the aggregation of stress-denatured proteins, in association with DnaK and GrpE. It is the nucleotide exchange factor for DnaK and may function as a thermosensor. Unfolded proteins bind initially to DnaJ; upon interaction with the DnaJ-bound protein, DnaK hydrolyzes its bound ATP, resulting in the formation of a stable complex. GrpE releases ADP from DnaK; ATP binding to DnaK triggers the release of the substrate protein, thus completing the reaction cycle. Several rounds of ATP-dependent interactions between DnaJ, DnaK and GrpE are required for fully efficient folding. The polypeptide is Protein GrpE (Vibrio cholerae serotype O1 (strain ATCC 39315 / El Tor Inaba N16961)).